The following is a 442-amino-acid chain: GTPase HflX (442 aa).

Residues 186–362 form the Hflx-type G domain; that stretch reads VLVALAGYTN…ALNRVVLKLP (177 aa). GTP is bound by residues 192–199, 217–221, 238–241, 306–309, and 341–343; these read GYTNAGKS, FTTLD, DTVG, NKID, and SAR. Mg(2+) is bound by residues Ser-199 and Thr-219.

Belongs to the TRAFAC class OBG-HflX-like GTPase superfamily. HflX GTPase family. In terms of assembly, monomer. Associates with the 50S ribosomal subunit. Requires Mg(2+) as cofactor.

The protein resides in the cytoplasm. GTPase that associates with the 50S ribosomal subunit and may have a role during protein synthesis or ribosome biogenesis. This is GTPase HflX from Thermococcus kodakarensis (strain ATCC BAA-918 / JCM 12380 / KOD1) (Pyrococcus kodakaraensis (strain KOD1)).